A 310-amino-acid chain; its full sequence is Olfactory receptor 10G2 (310 aa).

The Extracellular portion of the chain corresponds to 1-29 (MGKTKNTSLDAVVTDFILLGLSHPPNLRS). Asparagine 6 is a glycosylation site (N-linked (GlcNAc...) asparagine). Residues 30-50 (LLFLVFFIIYILTQLGNLLIL) form a helical membrane-spanning segment. Over 51–58 (LTMWADPK) the chain is Cytoplasmic. A helical membrane pass occupies residues 59–80 (LCARPMYILLGVLSFLDMWLSS). Residues 81–104 (VTVPLLILDFTPSIKAIPFGGCVA) are Extracellular-facing. Cysteine 102 and cysteine 194 are joined by a disulfide. Residues 105–125 (QLYFFHFLGSTQCFLYTLMAY) traverse the membrane as a helical segment. Residues 126 to 144 (DRYLAICQPLRYPVLMNGR) lie on the Cytoplasmic side of the membrane. Residues 145 to 165 (LCTVLVAGAWVAGSMHGSIQA) form a helical membrane-spanning segment. Topologically, residues 166-202 (TLTFRLPYCGPNQVDYFICDIPAVLRLACADTTVNEL) are extracellular. The helical transmembrane segment at 203–222 (VTFVDVGVVAASCFMLILLS) threads the bilayer. At 223 to 242 (YANIVNAILKIRTTDGRRRA) the chain is on the cytoplasmic side. The chain crosses the membrane as a helical span at residues 243–263 (FSTCGSHLIVVTVYYVPCIFI). The Extracellular segment spans residues 264-274 (YLRAGSKDPLD). A helical membrane pass occupies residues 275 to 295 (GAAAVFYTVVTPLLNPLIYTL). Residues 296-310 (RNQEVKSALKRITAG) lie on the Cytoplasmic side of the membrane.

Belongs to the G-protein coupled receptor 1 family.

Its subcellular location is the cell membrane. In terms of biological role, odorant receptor. The chain is Olfactory receptor 10G2 (OR10G2) from Homo sapiens (Human).